A 306-amino-acid polypeptide reads, in one-letter code: Diacylglycerol kinase (306 aa).

The region spanning M1–Y132 is the DAGKc domain. ATP is bound by residues N10 to G14, T41, G67 to E73, and T94. Residues R213, D216, and Y218 each coordinate Mg(2+). E273 functions as the Proton acceptor in the catalytic mechanism.

The protein belongs to the diacylglycerol/lipid kinase family. In terms of assembly, homodimer. Mg(2+) is required as a cofactor.

It catalyses the reaction a 1,2-diacyl-sn-glycerol + ATP = a 1,2-diacyl-sn-glycero-3-phosphate + ADP + H(+). In terms of biological role, catalyzes the phosphorylation of diacylglycerol (DAG) into phosphatidic acid. Is a key enzyme involved in the production of lipoteichoic acid by reintroducing DAG formed from the breakdown of membrane phospholipids into the phosphatidylglycerol biosynthetic pathway. This Staphylococcus carnosus (strain TM300) protein is Diacylglycerol kinase (dagK).